The sequence spans 274 residues: 3-methyl-2-oxobutanoate hydroxymethyltransferase (274 aa).

Asp-44 and Asp-83 together coordinate Mg(2+). 3-methyl-2-oxobutanoate contacts are provided by residues 44-45 (DS), Asp-83, and Lys-113. Glu-115 contributes to the Mg(2+) binding site. Glu-182 functions as the Proton acceptor in the catalytic mechanism.

The protein belongs to the PanB family. As to quaternary structure, homodecamer; pentamer of dimers. Requires Mg(2+) as cofactor.

It is found in the cytoplasm. It carries out the reaction 3-methyl-2-oxobutanoate + (6R)-5,10-methylene-5,6,7,8-tetrahydrofolate + H2O = 2-dehydropantoate + (6S)-5,6,7,8-tetrahydrofolate. It participates in cofactor biosynthesis; (R)-pantothenate biosynthesis; (R)-pantoate from 3-methyl-2-oxobutanoate: step 1/2. Catalyzes the reversible reaction in which hydroxymethyl group from 5,10-methylenetetrahydrofolate is transferred onto alpha-ketoisovalerate to form ketopantoate. This chain is 3-methyl-2-oxobutanoate hydroxymethyltransferase, found in Campylobacter jejuni subsp. jejuni serotype O:6 (strain 81116 / NCTC 11828).